A 345-amino-acid polypeptide reads, in one-letter code: Phosphoribosylformylglycinamidine cyclo-ligase (345 aa).

It belongs to the AIR synthase family.

It is found in the cytoplasm. It carries out the reaction 2-formamido-N(1)-(5-O-phospho-beta-D-ribosyl)acetamidine + ATP = 5-amino-1-(5-phospho-beta-D-ribosyl)imidazole + ADP + phosphate + H(+). The protein operates within purine metabolism; IMP biosynthesis via de novo pathway; 5-amino-1-(5-phospho-D-ribosyl)imidazole from N(2)-formyl-N(1)-(5-phospho-D-ribosyl)glycinamide: step 2/2. This chain is Phosphoribosylformylglycinamidine cyclo-ligase, found in Salmonella typhi.